Reading from the N-terminus, the 278-residue chain is D-arabinitol 2-dehydrogenase [ribulose-forming] (278 aa).

Residues L28 and N49 each contribute to the NADP(+) site. Residue S166 is the Proton donor of the active site. Y181, K185, I214, and T216 together coordinate NADP(+). The active-site Proton acceptor is the Y181. K185 (lowers pKa of active site Tyr) is an active-site residue.

Belongs to the short-chain dehydrogenases/reductases (SDR) family.

It catalyses the reaction D-arabinitol + NAD(+) = D-ribulose + NADH + H(+). The protein operates within carbohydrate metabolism; D-arabinitol metabolism. In Scheffersomyces stipitis (strain ATCC 58785 / CBS 6054 / NBRC 10063 / NRRL Y-11545) (Yeast), this protein is D-arabinitol 2-dehydrogenase [ribulose-forming] (ARDH).